The following is a 271-amino-acid chain: (+)-cis,trans-nepetalactol synthase NEPS1 (271 aa).

NAD(+)-binding positions include Gly-24–Gly-30, Asp-49–Gln-51, Asp-72–Val-73, and Asn-99. Substrate-binding residues include Thr-154 and Tyr-167. Residues Tyr-167, Lys-171, and Val-200–Ala-205 each bind NAD(+). The active-site Proton acceptor is Tyr-167.

The protein belongs to the short-chain dehydrogenases/reductases (SDR) family.

The enzyme catalyses (S)-8-oxocitronellyl enol = cis-trans-nepetalactol. The catalysed reaction is cis-cis-nepetalactol + NAD(+) = cis-cis-nepetalactone + NADH + H(+). It carries out the reaction cis-trans-nepetalactol + NAD(+) = cis-trans-nepetalactone + NADH + H(+). Its function is as follows. Bifunctional enzyme that possesses cyclase and dehydrogenase activities. Functions as a non-oxidoreductive cyclase to promote the formation of cis-trans-nepetalactol. Functions as dehydrogenase to oxidize cis-cis-nepetalactol and cis-trans-nepetalactol into nepetalactones, metabolites that are both insect-repellent and have euphoric effect in cats. Binds NAD(+) as classical short-chain dehydrogenase/reductase (SDR), but does not utilize it for its redox-neutral cyclase activity. The protein is (+)-cis,trans-nepetalactol synthase NEPS1 of Nepeta racemosa (Catmint).